Here is a 389-residue protein sequence, read N- to C-terminus: (S)-8-oxocitronellyl enol synthase CYC1 (389 aa).

NADP(+)-binding positions include 34–36, 62–63, 80–81, 104–105, and Q138; these read TGI, RR, DV, and AW. Active-site residues include K142 and Y174. Residues K142 and Y174 each contribute to the substrate site. NADP(+) contacts are provided by residues Y174, V201, and 208–210; that span reads SMM. S350 is a substrate binding site.

The protein belongs to the short-chain dehydrogenases/reductases (SDR) family. Highly divergent.

It carries out the reaction (S)-8-oxocitronellyl enol + NADP(+) = (6E)-8-oxogeranial + NADPH + H(+). The enzyme catalyses (S)-8-oxocitronellyl enol + NAD(+) = (6E)-8-oxogeranial + NADH + H(+). Functionally, iridoid synthase that catalyzes the first step in generation of the iridoid ring scaffold using the linear monoterpene (6E)-8-oxogeranial as substrate. Iridoids comprise a large family of distinctive bicyclic monoterpenes that possess a wide range of pharmacological activities, including anticancer, anti-inflammatory, antifungal and antibacterial activities. The protein is (S)-8-oxocitronellyl enol synthase CYC1 of Camptotheca acuminata (Happy tree).